The sequence spans 85 residues: ATP synthase subunit 9, mitochondrial (85 aa).

Helical transmembrane passes span 19-39 (IGAGAATIALAGAAIGIGNVF) and 61-81 (ILGFALTEAIALFALMMAFLI).

Belongs to the ATPase C chain family. F-type ATPases have 2 components, CF(1) - the catalytic core - and CF(0) - the membrane proton channel. CF(1) has five subunits: alpha(3), beta(3), gamma(1), delta(1), epsilon(1). CF(0) has three main subunits: a, b and c.

It localises to the mitochondrion membrane. Its function is as follows. This protein is one of the chains of the nonenzymatic membrane component (F0) of mitochondrial ATPase. The chain is ATP synthase subunit 9, mitochondrial (ATP9) from Arabidopsis thaliana (Mouse-ear cress).